The primary structure comprises 668 residues: Fructose-1,6-bisphosphatase class 3 (668 aa).

The protein belongs to the FBPase class 3 family. Mn(2+) is required as a cofactor.

The enzyme catalyses beta-D-fructose 1,6-bisphosphate + H2O = beta-D-fructose 6-phosphate + phosphate. The protein operates within carbohydrate biosynthesis; gluconeogenesis. The polypeptide is Fructose-1,6-bisphosphatase class 3 (Clostridium botulinum (strain Kyoto / Type A2)).